A 418-amino-acid polypeptide reads, in one-letter code: UDP-N-acetylglucosamine 1-carboxyvinyltransferase (418 aa).

22–23 (KN) contributes to the phosphoenolpyruvate binding site. UDP-N-acetyl-alpha-D-glucosamine is bound at residue R92. C116 functions as the Proton donor in the catalytic mechanism. A 2-(S-cysteinyl)pyruvic acid O-phosphothioketal modification is found at C116. Residues 121–125 (RPIDL), D305, and L327 each bind UDP-N-acetyl-alpha-D-glucosamine.

It belongs to the EPSP synthase family. MurA subfamily.

It localises to the cytoplasm. It carries out the reaction phosphoenolpyruvate + UDP-N-acetyl-alpha-D-glucosamine = UDP-N-acetyl-3-O-(1-carboxyvinyl)-alpha-D-glucosamine + phosphate. It functions in the pathway cell wall biogenesis; peptidoglycan biosynthesis. Cell wall formation. Adds enolpyruvyl to UDP-N-acetylglucosamine. The chain is UDP-N-acetylglucosamine 1-carboxyvinyltransferase from Campylobacter lari (strain RM2100 / D67 / ATCC BAA-1060).